The chain runs to 148 residues: Lysozyme C, milk isozyme (148 aa).

Residues 1 to 18 (MKALLIVGLLLLSVAVQG) form the signal peptide. The C-type lysozyme domain occupies 19-148 (KKFQRCELAR…LRSYVQGCRV (130 aa)). 4 disulfide bridges follow: cysteine 24–cysteine 146, cysteine 48–cysteine 134, cysteine 83–cysteine 99, and cysteine 95–cysteine 113. Catalysis depends on residues glutamate 53 and aspartate 71.

The protein belongs to the glycosyl hydrolase 22 family.

It catalyses the reaction Hydrolysis of (1-&gt;4)-beta-linkages between N-acetylmuramic acid and N-acetyl-D-glucosamine residues in a peptidoglycan and between N-acetyl-D-glucosamine residues in chitodextrins.. In terms of biological role, lysozymes have primarily a bacteriolytic function; those in tissues and body fluids are associated with the monocyte-macrophage system and enhance the activity of immunoagents. The sequence is that of Lysozyme C, milk isozyme from Bos taurus (Bovine).